The following is a 345-amino-acid chain: Histidinol-phosphate aminotransferase (345 aa).

N6-(pyridoxal phosphate)lysine is present on lysine 206.

This sequence belongs to the class-II pyridoxal-phosphate-dependent aminotransferase family. Histidinol-phosphate aminotransferase subfamily. In terms of assembly, homodimer. It depends on pyridoxal 5'-phosphate as a cofactor.

The enzyme catalyses L-histidinol phosphate + 2-oxoglutarate = 3-(imidazol-4-yl)-2-oxopropyl phosphate + L-glutamate. It participates in amino-acid biosynthesis; L-histidine biosynthesis; L-histidine from 5-phospho-alpha-D-ribose 1-diphosphate: step 7/9. This chain is Histidinol-phosphate aminotransferase, found in Bacteroides fragilis (strain ATCC 25285 / DSM 2151 / CCUG 4856 / JCM 11019 / LMG 10263 / NCTC 9343 / Onslow / VPI 2553 / EN-2).